A 270-amino-acid polypeptide reads, in one-letter code: Bis(5'-nucleosyl)-tetraphosphatase, symmetrical (270 aa).

Belongs to the Ap4A hydrolase family.

It catalyses the reaction P(1),P(4)-bis(5'-adenosyl) tetraphosphate + H2O = 2 ADP + 2 H(+). Functionally, hydrolyzes diadenosine 5',5'''-P1,P4-tetraphosphate to yield ADP. The protein is Bis(5'-nucleosyl)-tetraphosphatase, symmetrical of Haemophilus ducreyi (strain 35000HP / ATCC 700724).